The primary structure comprises 119 residues: uncharacterized protein (119 aa).

2 helical membrane passes run 53 to 73 (AATI…SFLA) and 92 to 112 (FITH…WFLF).

It localises to the membrane. This is an uncharacterized protein from Saccharomyces cerevisiae (strain ATCC 204508 / S288c) (Baker's yeast).